The sequence spans 646 residues: Beta-galactosidase-1-like protein (646 aa).

Positions 1–23 (MPPDLPSLLLRLVVLLLLSQAEA) are cleaved as a signal peptide. Asn93 carries an N-linked (GlcNAc...) asparagine glycan. Glu182 functions as the Proton donor in the catalytic mechanism. Asn239 carries an N-linked (GlcNAc...) asparagine glycan. Glu260 (nucleophile) is an active-site residue.

The protein belongs to the glycosyl hydrolase 35 family.

The protein localises to the secreted. Functionally, probable glycosyl hydrolase. This chain is Beta-galactosidase-1-like protein (Glb1l), found in Mus musculus (Mouse).